The sequence spans 225 residues: Thymidylate kinase (225 aa).

10 to 17 (GPEGAGKT) provides a ligand contact to ATP.

Belongs to the thymidylate kinase family.

It carries out the reaction dTMP + ATP = dTDP + ADP. Phosphorylation of dTMP to form dTDP in both de novo and salvage pathways of dTTP synthesis. The chain is Thymidylate kinase from Geobacillus thermodenitrificans (strain NG80-2).